We begin with the raw amino-acid sequence, 240 residues long: Putative truncated effector protein hopW1-2 (240 aa).

Positions 1-32 (MSPAQIIRTSHSFPPSFTGTSSSAENSHAQSP) are disordered. The segment covering 9–23 (TSHSFPPSFTGTSSS) has biased composition (low complexity).

This sequence belongs to the HopW family.

This is Putative truncated effector protein hopW1-2 (hopW1-2) from Pseudomonas syringae pv. maculicola.